Here is a 485-residue protein sequence, read N- to C-terminus: UDP-N-acetylmuramate--L-alanine ligase (485 aa).

120–126 (GSHGKTT) is an ATP binding site.

This sequence belongs to the MurCDEF family.

The protein localises to the cytoplasm. It carries out the reaction UDP-N-acetyl-alpha-D-muramate + L-alanine + ATP = UDP-N-acetyl-alpha-D-muramoyl-L-alanine + ADP + phosphate + H(+). The protein operates within cell wall biogenesis; peptidoglycan biosynthesis. Functionally, cell wall formation. This chain is UDP-N-acetylmuramate--L-alanine ligase, found in Rickettsia peacockii (strain Rustic).